A 294-amino-acid chain; its full sequence is Factor associated with metabolism and energy (294 aa).

A compositionally biased stretch (basic residues) spans 1 to 12 (MGLGHSKAHPRV). Disordered regions lie at residues 1-28 (MGLG…TPST) and 255-279 (FWDS…LVRT). Gly-2 is lipidated: N-myristoyl glycine. The span at 17-28 (PLQSQETETPST) shows a compositional bias: polar residues. Residues 268-279 (KDERRPQALVRT) show a composition bias toward basic and acidic residues.

As to expression, expressed in proximal tubules of the kidney.

Its subcellular location is the cell membrane. The protein localises to the cytoplasmic vesicle. Its function is as follows. May be involved in tuning the metabolism, energy expenditure, and excretion processes. The polypeptide is Factor associated with metabolism and energy (Mus musculus (Mouse)).